The sequence spans 793 residues: Toll-like receptor 2 type-1 (793 aa).

The N-terminal stretch at 1–25 is a signal peptide; it reads MFNQSKQKPTMKLMWQAWLIYTALA. Over 26-597 the chain is Extracellular; sequence AHLPEEQALR…QLSLMECHRS (572 aa). Residues Cys41 and Cys47 are joined by a disulfide bond. N-linked (GlcNAc...) asparagine glycosylation occurs at Asn48. LRR repeat units follow at residues 64 to 85, 88 to 109, 112 to 133, 136 to 157, 161 to 182, and 185 to 206; these read KITV…DLQK, NLRT…SFGS, KLEL…WFGP, SLQH…SPFS, NLSS…NFEG, and FLNT…SLKS. N-linked (GlcNAc...) asparagine glycosylation occurs at Asn120. N-linked (GlcNAc...) asparagine glycans are attached at residues Asn161, Asn195, Asn254, and Asn325. An intrachain disulfide couples Cys362 to Cys391. LRR repeat units follow at residues 370–391, 397–418, 423–444, 446–467, 468–486, 487–508, and 509–530; these read SLLY…ETIC, SLQT…ARYI, KLIN…CEWP, NLKY…IPST, LEVL…LQLP, FLKE…TDIP, and NLVA…EFES. N-linked (GlcNAc...) asparagine glycosylation is present at Asn402. A disulfide bond links Cys441 and Cys463. Asn451 carries an N-linked (GlcNAc...) asparagine glycan. An LRRCT domain is found at 542–596; sequence NNFICSCEFLSFIHHEAGIAQVLVGWPESYICDSPLTVRGAQVGSVQLSLMECHR. Residues 598–618 form a helical membrane-spanning segment; the sequence is LLVSLICTLVFLFILILVVVG. Over 619–793 the chain is Cytoplasmic; the sequence is YKYHAVWYMR…WENLKAALKS (175 aa). The TIR domain maps to 648–791; the sequence is ICYDAFVSYS…MFWENLKAAL (144 aa).

Belongs to the Toll-like receptor family. In terms of assembly, binds MYD88 (via TIR domain). In terms of processing, N-glycosylated. TLR2-1 is more heavily glycosylated than TLR2-2. In terms of tissue distribution, highly expressed in ovary. Detected at lower levels in heart, lung, gizzard and testis.

The protein resides in the membrane. In terms of biological role, participates in the innate immune response to microbial agents. Acts via MYD88 and TRAF6, leading to NF-kappa-B activation, cytokine secretion and the inflammatory response. Does not respond to LPS and responds with less ability than TLR2-2 to mycoplasmal macrophage-activating lipopeptide-2kD (MALP-2). This chain is Toll-like receptor 2 type-1 (TLR2-1), found in Gallus gallus (Chicken).